Here is a 121-residue protein sequence, read N- to C-terminus: uncharacterized protein (121 aa).

It to E.coli YcjD and H.influenzae HI_1162.

This is an uncharacterized protein from Haemophilus influenzae (strain ATCC 51907 / DSM 11121 / KW20 / Rd).